A 365-amino-acid polypeptide reads, in one-letter code: Nudix hydrolase 24, chloroplastic (365 aa).

A chloroplast-targeting transit peptide spans 1–30; sequence MASAFCSLCPTPTSLFSSHALIPTLQWRSS. One can recognise a Nudix hydrolase domain in the interval 196–337; it reads GYAIHVNGYV…KDSCSLVIID (142 aa). A Nudix box motif is present at residues 235–256; sequence GGLPHGISVCENLVKECEEEAG. Residues E250 and E254 each contribute to the Mg(2+) site.

Belongs to the Nudix hydrolase family. Mg(2+) is required as a cofactor. The cofactor is Mn(2+). Expressed in leaves.

The protein localises to the plastid. It localises to the chloroplast. In terms of biological role, probably mediates the hydrolysis of some nucleoside diphosphate derivatives. The polypeptide is Nudix hydrolase 24, chloroplastic (NUDT24) (Arabidopsis thaliana (Mouse-ear cress)).